Reading from the N-terminus, the 123-residue chain is UPF0102 protein MCA0184 (123 aa).

Belongs to the UPF0102 family.

This chain is UPF0102 protein MCA0184, found in Methylococcus capsulatus (strain ATCC 33009 / NCIMB 11132 / Bath).